A 787-amino-acid chain; its full sequence is Putative pentatricopeptide repeat-containing protein At1g69350, mitochondrial (787 aa).

The N-terminal 16 residues, 1–16 (MTQYMPLFRSCSSLRL), are a transit peptide targeting the mitochondrion. PPR repeat units follow at residues 33–63 (DPLP…FPYP), 64–98 (DSFM…TTQI), 99–134 (SKFV…GVDD), 135–165 (DAVI…MPVR), 166–200 (DLVA…GVEP), 201–235 (DAVT…MFDL), 236–266 (DETL…IAKK), 267–301 (NAVS…GIEP), 302–336 (NLVT…ELDP), 338–368 (YESL…VSDR), 369–403 (NIVA…RIKP), 404–434 (DAFT…VIRT), 438–468 (DEFV…IKHR), 469–503 (SVVT…YLEM), 504–534 (NEVT…LIIS), 538–568 (DLFT…MSSR), 569–603 (SIVS…GTKP), 604–638 (NEVV…GVSP), and 639–669 (NSEH…MPFL). The interval 674-749 (VWGSLVNGCR…VPGYSAIEID (76 aa)) is type E motif. Residues 750–780 (QKVFRFGAGEENRIQTDEIYRFLGNLQNLTN) form a type E(+) motif region.

This sequence belongs to the PPR family. PCMP-E subfamily.

It localises to the mitochondrion. This chain is Putative pentatricopeptide repeat-containing protein At1g69350, mitochondrial (PCMP-E66), found in Arabidopsis thaliana (Mouse-ear cress).